The chain runs to 439 residues: Ribosomal protein uS12 methylthiotransferase RimO (439 aa).

The region spanning 7-119 (KQLCLISLGC…IDILIAKKQN (113 aa)) is the MTTase N-terminal domain. [4Fe-4S] cluster is bound by residues Cys-16, Cys-50, Cys-82, Cys-151, Cys-155, and Cys-158. One can recognise a Radical SAM core domain in the interval 137-368 (TGSSVHAYVK…ALKHQNHSFK (232 aa)).

It belongs to the methylthiotransferase family. RimO subfamily. The cofactor is [4Fe-4S] cluster.

Its subcellular location is the cytoplasm. The enzyme catalyses L-aspartate(89)-[ribosomal protein uS12]-hydrogen + (sulfur carrier)-SH + AH2 + 2 S-adenosyl-L-methionine = 3-methylsulfanyl-L-aspartate(89)-[ribosomal protein uS12]-hydrogen + (sulfur carrier)-H + 5'-deoxyadenosine + L-methionine + A + S-adenosyl-L-homocysteine + 2 H(+). Its function is as follows. Catalyzes the methylthiolation of an aspartic acid residue of ribosomal protein uS12. The sequence is that of Ribosomal protein uS12 methylthiotransferase RimO from Helicobacter pylori (strain J99 / ATCC 700824) (Campylobacter pylori J99).